Reading from the N-terminus, the 221-residue chain is Ribosomal RNA large subunit methyltransferase E (221 aa).

Gly-60, Trp-62, Asp-89, Asp-105, and Asp-134 together coordinate S-adenosyl-L-methionine. The active-site Proton acceptor is Lys-174.

This sequence belongs to the class I-like SAM-binding methyltransferase superfamily. RNA methyltransferase RlmE family.

The protein localises to the cytoplasm. It carries out the reaction uridine(2552) in 23S rRNA + S-adenosyl-L-methionine = 2'-O-methyluridine(2552) in 23S rRNA + S-adenosyl-L-homocysteine + H(+). Specifically methylates the uridine in position 2552 of 23S rRNA at the 2'-O position of the ribose in the fully assembled 50S ribosomal subunit. This Cupriavidus metallidurans (strain ATCC 43123 / DSM 2839 / NBRC 102507 / CH34) (Ralstonia metallidurans) protein is Ribosomal RNA large subunit methyltransferase E.